The chain runs to 179 residues: MSRIGKLPIEIPKGVKISYTDSNLQVVGPKGTLSRTIMSGVTIEMTENHISVSRDDDGIKSRSAHGLTRTLINNMVTGVTKGFETALEINGVGYRAELKGDVLNLSLGYSHPINFSLPKGINVEVDKMTKILVKGVDKELVGQTAAKIRDFRGPEPYKGKGVKYADETILRKAGKTGKK.

This sequence belongs to the universal ribosomal protein uL6 family. Part of the 50S ribosomal subunit.

Functionally, this protein binds to the 23S rRNA, and is important in its secondary structure. It is located near the subunit interface in the base of the L7/L12 stalk, and near the tRNA binding site of the peptidyltransferase center. In Geotalea daltonii (strain DSM 22248 / JCM 15807 / FRC-32) (Geobacter daltonii), this protein is Large ribosomal subunit protein uL6.